The primary structure comprises 663 residues: UvrABC system protein B (663 aa).

The Helicase ATP-binding domain occupies 31–188 (DNIEGGEKAQ…NDLVDIQFER (158 aa)). 44–51 (GATGTGKT) is a binding site for ATP. A Beta-hairpin motif is present at residues 97–120 (YYDYYQPEAYVPSSDTYIEKDSSV). In terms of domain architecture, Helicase C-terminal spans 435-601 (QMDDLLGEIN…TIKKDIRDLI (167 aa)). One can recognise a UVR domain in the interval 627–662 (QEAIKKLQKQMQEAAELLDFELAAQIRDMVLELKAM).

This sequence belongs to the UvrB family. As to quaternary structure, forms a heterotetramer with UvrA during the search for lesions. Interacts with UvrC in an incision complex.

The protein resides in the cytoplasm. In terms of biological role, the UvrABC repair system catalyzes the recognition and processing of DNA lesions. A damage recognition complex composed of 2 UvrA and 2 UvrB subunits scans DNA for abnormalities. Upon binding of the UvrA(2)B(2) complex to a putative damaged site, the DNA wraps around one UvrB monomer. DNA wrap is dependent on ATP binding by UvrB and probably causes local melting of the DNA helix, facilitating insertion of UvrB beta-hairpin between the DNA strands. Then UvrB probes one DNA strand for the presence of a lesion. If a lesion is found the UvrA subunits dissociate and the UvrB-DNA preincision complex is formed. This complex is subsequently bound by UvrC and the second UvrB is released. If no lesion is found, the DNA wraps around the other UvrB subunit that will check the other stand for damage. The sequence is that of UvrABC system protein B from Streptococcus mutans serotype c (strain ATCC 700610 / UA159).